A 531-amino-acid polypeptide reads, in one-letter code: Bifunctional protein TrpGD (531 aa).

The Glutamine amidotransferase type-1 domain maps to 3-196 (DILLLDNIDS…LAWAQQKLEP (194 aa)). 57–59 (GPG) is an L-glutamine binding site. The active-site Nucleophile; for GATase activity is Cys-84. L-glutamine is bound by residues Gln-88 and 134-135 (SL). Active-site for GATase activity residues include His-170 and Glu-172. The anthranilate phosphoribosyltransferase stretch occupies residues 202 to 531 (PILEKLYQAQ…DRVTALAARG (330 aa)).

The protein in the C-terminal section; belongs to the anthranilate phosphoribosyltransferase family. Heterotetramer consisting of two non-identical subunits: a beta subunit (TrpG) and a large alpha subunit (TrpE).

It catalyses the reaction chorismate + L-glutamine = anthranilate + pyruvate + L-glutamate + H(+). It carries out the reaction N-(5-phospho-beta-D-ribosyl)anthranilate + diphosphate = 5-phospho-alpha-D-ribose 1-diphosphate + anthranilate. The protein operates within amino-acid biosynthesis; L-tryptophan biosynthesis; L-tryptophan from chorismate: step 1/5. Its pathway is amino-acid biosynthesis; L-tryptophan biosynthesis; L-tryptophan from chorismate: step 2/5. Cooperatively feedback inhibited by tryptophan. Part of a heterotetrameric complex that catalyzes the two-step biosynthesis of anthranilate, an intermediate in the biosynthesis of L-tryptophan. In the first step, the glutamine-binding beta subunit (TrpG) of anthranilate synthase (AS) provides the glutamine amidotransferase activity which generates ammonia as a substrate that, along with chorismate, is used in the second step, catalyzed by the large alpha subunit of AS (TrpE) to produce anthranilate. In the absence of TrpG, TrpE can synthesize anthranilate directly from chorismate and high concentrations of ammonia. In addition to synthesizing anthranilate, it also catalyzes the second step of the pathway, the transfer of the phosphoribosyl group of 5-phosphorylribose-1-pyrophosphate (PRPP) to anthranilate. This Escherichia coli (strain K12) protein is Bifunctional protein TrpGD (trpGD).